A 304-amino-acid chain; its full sequence is Tritrans,polycis-undecaprenyl-diphosphate synthase (geranylgeranyl-diphosphate specific) (304 aa).

Aspartate 33 is a catalytic residue. Mg(2+) is bound at residue aspartate 33. Residues 34–37, lysine 46, histidine 50, and 78–80 contribute to the substrate site; these read GNRR and STE. Asparagine 81 acts as the Proton acceptor in catalysis. Residues phenylalanine 82, arginine 84, arginine 203, and 209 to 211 each bind substrate; that span reads RTS.

It belongs to the UPP synthase family. As to quaternary structure, homodimer. Requires Mg(2+) as cofactor.

It carries out the reaction geranylgeranyl diphosphate + 7 isopentenyl diphosphate = tri-trans,hepta-cis-undecaprenyl diphosphate + 7 diphosphate. In terms of biological role, catalyzes the sequential condensation of isopentenyl diphosphate (IPP) with geranylgeranyl diphosphate (GGPP) to yield (2Z,6Z,10Z,14Z,18Z,22Z,26Z,30E,34E,38E)-undecaprenyl diphosphate (tritrans,heptacis-UPP). It is probably the precursor of glycosyl carrier lipids. The polypeptide is Tritrans,polycis-undecaprenyl-diphosphate synthase (geranylgeranyl-diphosphate specific) (Haloarcula marismortui (strain ATCC 43049 / DSM 3752 / JCM 8966 / VKM B-1809) (Halobacterium marismortui)).